The following is a 1244-amino-acid chain: ATP-dependent helicase/nuclease subunit A (1244 aa).

The region spanning 4 to 475 (KKWTAEQLAA…IGLSKNFRSR (472 aa)) is the UvrD-like helicase ATP-binding domain. An ATP-binding site is contributed by 25-32 (AAAGAGKT). The 302-residue stretch at 515–816 (EDVKTATGPV…RIMSIHKSKG (302 aa)) folds into the UvrD-like helicase C-terminal domain. The interval 538–559 (EQNTDSAEEKLTDGEEQEDLDS) is disordered.

Belongs to the helicase family. AddA subfamily. In terms of assembly, heterodimer of AddA and AddB/RexB. The cofactor is Mg(2+).

The catalysed reaction is Couples ATP hydrolysis with the unwinding of duplex DNA by translocating in the 3'-5' direction.. It catalyses the reaction ATP + H2O = ADP + phosphate + H(+). In terms of biological role, the heterodimer acts as both an ATP-dependent DNA helicase and an ATP-dependent, dual-direction single-stranded exonuclease. Recognizes the chi site generating a DNA molecule suitable for the initiation of homologous recombination. The AddA nuclease domain is required for chi fragment generation; this subunit has the helicase and 3' -&gt; 5' nuclease activities. In Desulforamulus reducens (strain ATCC BAA-1160 / DSM 100696 / MI-1) (Desulfotomaculum reducens), this protein is ATP-dependent helicase/nuclease subunit A.